A 311-amino-acid polypeptide reads, in one-letter code: Cytosolic Fe-S cluster assembly factor Nubp1 homolog (311 aa).

[4Fe-4S] cluster-binding residues include cysteine 9, cysteine 23, cysteine 26, and cysteine 32. An ATP-binding site is contributed by 63–70; it reads GKGGVGKS. Positions 240 and 243 each coordinate [4Fe-4S] cluster.

It belongs to the Mrp/NBP35 ATP-binding proteins family. NUBP1/NBP35 subfamily. Heterotetramer of 2 Nubp1 and 2 Nubp2 chains. [4Fe-4S] cluster serves as cofactor.

It is found in the cytoplasm. Functionally, component of the cytosolic iron-sulfur (Fe/S) protein assembly (CIA) machinery. Required for maturation of extramitochondrial Fe-S proteins. The Nubp1-Nubp2 heterotetramer forms a Fe-S scaffold complex, mediating the de novo assembly of an Fe-S cluster and its transfer to target apoproteins. This is Cytosolic Fe-S cluster assembly factor Nubp1 homolog from Drosophila erecta (Fruit fly).